The chain runs to 369 residues: Coiled-coil domain-containing protein 130 homolog (369 aa).

The span at 233–263 (TRYRDTKTHDDHLESSRDRIESRRIFRRPEE) shows a compositional bias: basic and acidic residues. The interval 233 to 369 (TRYRDTKTHD…EYGNSSDDSD (137 aa)) is disordered. Positions 266–282 (TPSTSSGSSGGAVPSAS) are enriched in low complexity. Positions 283 to 297 (ERLKATMKAERDKRI) are enriched in basic and acidic residues. The span at 299 to 310 (ASFSTAGTSSAT) shows a compositional bias: low complexity.

This sequence belongs to the CWC16 family.

The protein is Coiled-coil domain-containing protein 130 homolog of Caenorhabditis elegans.